The chain runs to 761 residues: Signal transducer and transcription activator (761 aa).

Positions 594-658 (WKAGCIMGFI…APWTARDFQV (65 aa)) constitute an SH2 domain. Tyr711 is subject to Phosphotyrosine; by JAK.

This sequence belongs to the transcription factor STAT family. Forms a homodimer or a heterodimer with a related family member. In terms of processing, tyrosine phosphorylated by hopscotch. Phosphorylation is required for DNA-binding activity and dimerization.

The protein resides in the cytoplasm. The protein localises to the nucleus. Functionally, might play a role in signal transduction and activation of transcription. Plays an important role in the segmental pattern formation in the early embryo by activating specific stripes of pair rule gene expression in early development as part of the Janus kinase-STAT pathway. Might play a role in male germline stem cell maintenance. This is Signal transducer and transcription activator (Stat92E) from Drosophila melanogaster (Fruit fly).